We begin with the raw amino-acid sequence, 375 residues long: All-trans-retinol dehydrogenase [NAD(+)] ADH1B (375 aa).

Ser-2 carries the N-acetylserine modification. Phosphoserine is present on Ser-23. Tyr-35 carries the post-translational modification Phosphotyrosine. Cys-47, His-68, Cys-98, Cys-101, Cys-104, Cys-112, and Cys-175 together coordinate Zn(2+). NAD(+) is bound by residues 200–205, Asp-224, Lys-229, 293–295, and Arg-370; these read GLGGVG and VGV.

This sequence belongs to the zinc-containing alcohol dehydrogenase family. As to quaternary structure, homodimer or heterodimer of closely related subunits. Zn(2+) is required as a cofactor.

It is found in the cytoplasm. It carries out the reaction all-trans-retinol + NAD(+) = all-trans-retinal + NADH + H(+). It catalyses the reaction all-trans-4-hydroxyretinol + NAD(+) = all-trans-4-hydroxyretinal + NADH + H(+). The enzyme catalyses all-trans-4-oxoretinol + NAD(+) = all-trans-4-oxoretinal + NADH + H(+). Functionally, catalyzes the NAD-dependent oxidation of all-trans-retinol and its derivatives such as all-trans-4-hydroxyretinol and may participate in retinoid metabolism. In vitro can also catalyze the NADH-dependent reduction of all-trans-retinal and its derivatives such as all-trans-4-oxoretinal. Catalyzes in the oxidative direction with higher efficiency. Has the same affinity for all-trans-4-hydroxyretinol and all-trans-4-oxoretinal. This is All-trans-retinol dehydrogenase [NAD(+)] ADH1B from Pan troglodytes (Chimpanzee).